Here is a 115-residue protein sequence, read N- to C-terminus: NADH-ubiquinone oxidoreductase chain 3 (115 aa).

The next 3 helical transmembrane spans lie at 3 to 23, 55 to 75, and 87 to 107; these read LVIALLINTGLATILVMVAFW, FFLVAITFLLFDLEIAILLPI, and LLSLSGVLLALLTLGLAYEWL.

It belongs to the complex I subunit 3 family. Core subunit of respiratory chain NADH dehydrogenase (Complex I) which is composed of 45 different subunits. Interacts with TMEM186. Interacts with TMEM242.

Its subcellular location is the mitochondrion inner membrane. The catalysed reaction is a ubiquinone + NADH + 5 H(+)(in) = a ubiquinol + NAD(+) + 4 H(+)(out). In terms of biological role, core subunit of the mitochondrial membrane respiratory chain NADH dehydrogenase (Complex I) which catalyzes electron transfer from NADH through the respiratory chain, using ubiquinone as an electron acceptor. Essential for the catalytic activity of complex I. This chain is NADH-ubiquinone oxidoreductase chain 3, found in Ornithorhynchus anatinus (Duckbill platypus).